Consider the following 232-residue polypeptide: 2,3,4,5-tetrahydropyridine-2,6-dicarboxylate N-acetyltransferase (232 aa).

The protein belongs to the transferase hexapeptide repeat family. DapH subfamily.

It catalyses the reaction (S)-2,3,4,5-tetrahydrodipicolinate + acetyl-CoA + H2O = L-2-acetamido-6-oxoheptanedioate + CoA. It participates in amino-acid biosynthesis; L-lysine biosynthesis via DAP pathway; LL-2,6-diaminopimelate from (S)-tetrahydrodipicolinate (acetylase route): step 1/3. In terms of biological role, catalyzes the transfer of an acetyl group from acetyl-CoA to tetrahydrodipicolinate. The chain is 2,3,4,5-tetrahydropyridine-2,6-dicarboxylate N-acetyltransferase from Streptococcus gordonii (strain Challis / ATCC 35105 / BCRC 15272 / CH1 / DL1 / V288).